The primary structure comprises 466 residues: 3-isopropylmalate dehydratase large subunit (466 aa).

Cys-347, Cys-407, and Cys-410 together coordinate [4Fe-4S] cluster.

Belongs to the aconitase/IPM isomerase family. LeuC type 1 subfamily. Heterodimer of LeuC and LeuD. The cofactor is [4Fe-4S] cluster.

The enzyme catalyses (2R,3S)-3-isopropylmalate = (2S)-2-isopropylmalate. It participates in amino-acid biosynthesis; L-leucine biosynthesis; L-leucine from 3-methyl-2-oxobutanoate: step 2/4. In terms of biological role, catalyzes the isomerization between 2-isopropylmalate and 3-isopropylmalate, via the formation of 2-isopropylmaleate. The chain is 3-isopropylmalate dehydratase large subunit from Escherichia coli O127:H6 (strain E2348/69 / EPEC).